The primary structure comprises 79 residues: Small ribosomal subunit protein bS16c (79 aa).

It belongs to the bacterial ribosomal protein bS16 family.

It is found in the plastid. Its subcellular location is the chloroplast. The sequence is that of Small ribosomal subunit protein bS16c from Staurastrum punctulatum (Green alga).